The primary structure comprises 941 residues: Glycine dehydrogenase (decarboxylating) (941 aa).

Lysine 692 is modified (N6-(pyridoxal phosphate)lysine).

Belongs to the GcvP family. In terms of assembly, the glycine cleavage system is composed of four proteins: P, T, L and H. Pyridoxal 5'-phosphate serves as cofactor.

It catalyses the reaction N(6)-[(R)-lipoyl]-L-lysyl-[glycine-cleavage complex H protein] + glycine + H(+) = N(6)-[(R)-S(8)-aminomethyldihydrolipoyl]-L-lysyl-[glycine-cleavage complex H protein] + CO2. Functionally, the glycine cleavage system catalyzes the degradation of glycine. The P protein binds the alpha-amino group of glycine through its pyridoxal phosphate cofactor; CO(2) is released and the remaining methylamine moiety is then transferred to the lipoamide cofactor of the H protein. The chain is Glycine dehydrogenase (decarboxylating) from Mycolicibacterium paratuberculosis (strain ATCC BAA-968 / K-10) (Mycobacterium paratuberculosis).